The primary structure comprises 101 residues: MAKKSKIAKNEQRKEVVAHHAARRAELKRTAVAVTAGEEERAAARLALQRLPRDASPTRVRNRDAADGRPRGTLRKFGLSRIRVREMAHAGELPGVTKSSW.

Disordered regions lie at residues 1–21 (MAKK…AHHA) and 49–73 (QRLP…PRGT). 2 stretches are compositionally biased toward basic and acidic residues: residues 8–21 (AKNE…AHHA) and 61–70 (RNRDAADGRP).

Belongs to the universal ribosomal protein uS14 family. Part of the 30S ribosomal subunit. Contacts proteins S3 and S10.

In terms of biological role, binds 16S rRNA, required for the assembly of 30S particles and may also be responsible for determining the conformation of the 16S rRNA at the A site. The chain is Small ribosomal subunit protein uS14A from Kineococcus radiotolerans (strain ATCC BAA-149 / DSM 14245 / SRS30216).